The primary structure comprises 103 residues: Cell division suppressor protein YneA (103 aa).

Residues 36–87 (VKIKVQDGDTLWSLADHVAEKKHINKEDFIEWVTENNHLQTADIKPGDELIL) form the LysM domain.

The protein belongs to the YneA family.

Its subcellular location is the cytoplasm. Functionally, inhibits cell division during the SOS response. Affects a later stage of the cell division protein assembly, after the assembly of the Z ring, by probably suppressing recruitment of FtsL and/or DivIC to the division machinery. The protein is Cell division suppressor protein YneA of Bacillus velezensis (strain DSM 23117 / BGSC 10A6 / LMG 26770 / FZB42) (Bacillus amyloliquefaciens subsp. plantarum).